The following is a 92-amino-acid chain: Acylphosphatase (92 aa).

Residues 5–92 (RVHIIVSGLV…TSCREFRILT (88 aa)) form the Acylphosphatase-like domain. Residues R20 and N38 contribute to the active site.

The protein belongs to the acylphosphatase family.

It catalyses the reaction an acyl phosphate + H2O = a carboxylate + phosphate + H(+). This Chlorobaculum tepidum (strain ATCC 49652 / DSM 12025 / NBRC 103806 / TLS) (Chlorobium tepidum) protein is Acylphosphatase (acyP).